Here is a 375-residue protein sequence, read N- to C-terminus: Alpha-2,8-sialyltransferase 8B (375 aa).

Residues 1–6 (MQLQFR) are Cytoplasmic-facing. Residues 7–23 (SWMLAALTLLVVFLIFA) traverse the membrane as a helical; Signal-anchor for type II membrane protein segment. Over 24–375 (DISEIEEEIG…LTVGQCDGAT (352 aa)) the chain is Lumenal. N-linked (GlcNAc...) asparagine glycosylation is found at Asn-60, Asn-72, Asn-89, and Asn-134. 2 disulfide bridges follow: Cys-157-Cys-307 and Cys-171-Cys-371. CMP-N-acetyl-beta-neuraminate contacts are provided by Asn-162 and Asn-185. Residues Asn-219 and Asn-234 are each glycosylated (N-linked (GlcNAc...) asparagine). Residues Thr-294, Thr-295, Gly-296, Trp-316, Tyr-329, and His-330 each coordinate CMP-N-acetyl-beta-neuraminate. The active-site Proton donor/acceptor is His-346.

It belongs to the glycosyltransferase 29 family. In terms of processing, autopolysialylated. Autopolysialylation is not a prerequisite for the polysialylation acitity, but enhances the polysialylation acitity. In terms of tissue distribution, expressed only in newborn brain.

Its subcellular location is the golgi apparatus membrane. It is found in the secreted. The protein resides in the cell membrane. It catalyses the reaction [N-acetyl-alpha-D-neuraminosyl-(2-&gt;8)](n) + CMP-N-acetyl-beta-neuraminate = [N-acetyl-alpha-D-neuraminosyl-(2-&gt;8)](n+1) + CMP + H(+). Its pathway is protein modification; protein glycosylation. In terms of biological role, catalyzes the transfer of a sialic acid from a CMP-linked sialic acid donor onto a terminal alpha-2,3-, alpha-2,6-, or alpha-2,8-linked sialic acid of an N-linked glycan acceptor through alpha-2,8-linkages. Therefore, participates in polysialic acid synthesis on various sialylated N-acetyllactosaminyl oligosaccharides (alpha-2,3-, alpha-2,6-, or alpha-2,8-linked sialic acid), including NCAM1, NCAM1 N-glycans, FETUB N-glycans, and to a lesser extent sialylparagloboside (SPG) and AHSG, which does not require the initial addition of an alpha 2,8-sialic acid. However, does not exhibit sialic acid-polymerase activity. Catalyzes polysialic acid synthesis in the hippocampal on NCAM1 and supports neurite outgrowth. ST8SIA2-mediated polysialylation influences on oligodendrocyte differentiation and may promote the integrity of myelin and axons. This is Alpha-2,8-sialyltransferase 8B from Rattus norvegicus (Rat).